The primary structure comprises 301 residues: Probable 2-dehydro-3-deoxy-D-pentonate aldolase YjhH (301 aa).

Active-site charge relay system residues include Thr-46 and Tyr-109. Residue Tyr-135 is the Proton donor of the active site. The Schiff-base intermediate with substrate role is filled by Lys-164.

Belongs to the DapA family.

The protein localises to the cytoplasm. It carries out the reaction 2-dehydro-3-deoxy-D-arabinonate = glycolaldehyde + pyruvate. Functions as a 2-dehydro-3-deoxy-D-pentonate aldolase. In Escherichia coli (strain K12), this protein is Probable 2-dehydro-3-deoxy-D-pentonate aldolase YjhH (yjhH).